Consider the following 431-residue polypeptide: Islet cell autoantigen 1-like protein (431 aa).

Positions 44 to 247 (ASDAELDAKL…TAQMMTQIQE (204 aa)) constitute an AH domain. Disordered stretches follow at residues 295–316 (EEEE…PRDS) and 351–372 (CGSP…SLTS). The segment covering 301–316 (RFEREPAVARALPRDS) has biased composition (basic and acidic residues). Residues 356 to 372 (TGLTSQEPSVGPGSLTS) show a composition bias toward polar residues.

In Mus musculus (Mouse), this protein is Islet cell autoantigen 1-like protein (Ica1l).